The sequence spans 412 residues: Subtilisin-like protease 6 (412 aa).

Positions Met1–Gly20 are cleaved as a signal peptide. A propeptide spanning residues Ala21–Leu127 is cleaved from the precursor. The region spanning Lys36 to Thr120 is the Inhibitor I9 domain. Residues Asn123 and Asn126 are each glycosylated (N-linked (GlcNAc...) asparagine). Positions Ser135 to Lys412 constitute a Peptidase S8 domain. Active-site charge relay system residues include Asp167 and His198. Residues Asn252 and Asn264 are each glycosylated (N-linked (GlcNAc...) asparagine). Residue Ser358 is the Charge relay system of the active site. The N-linked (GlcNAc...) asparagine glycan is linked to Asn408.

This sequence belongs to the peptidase S8 family.

It localises to the secreted. In terms of biological role, secreted subtilisin-like serine protease with keratinolytic activity that contributes to pathogenicity. In Trichophyton tonsurans (Scalp ringworm fungus), this protein is Subtilisin-like protease 6 (SUB6).